Reading from the N-terminus, the 200-residue chain is ATP-dependent Clp protease proteolytic subunit (200 aa).

Ser-97 acts as the Nucleophile in catalysis. The active site involves His-122.

It belongs to the peptidase S14 family. In terms of assembly, fourteen ClpP subunits assemble into 2 heptameric rings which stack back to back to give a disk-like structure with a central cavity, resembling the structure of eukaryotic proteasomes.

It localises to the cytoplasm. It catalyses the reaction Hydrolysis of proteins to small peptides in the presence of ATP and magnesium. alpha-casein is the usual test substrate. In the absence of ATP, only oligopeptides shorter than five residues are hydrolyzed (such as succinyl-Leu-Tyr-|-NHMec, and Leu-Tyr-Leu-|-Tyr-Trp, in which cleavage of the -Tyr-|-Leu- and -Tyr-|-Trp bonds also occurs).. Cleaves peptides in various proteins in a process that requires ATP hydrolysis. Has a chymotrypsin-like activity. Plays a major role in the degradation of misfolded proteins. This is ATP-dependent Clp protease proteolytic subunit from Oleidesulfovibrio alaskensis (strain ATCC BAA-1058 / DSM 17464 / G20) (Desulfovibrio alaskensis).